Here is a 99-residue protein sequence, read N- to C-terminus: MDLIGFGYAALVTFGSIFGYKRRGGVPSLIAGLFVGCLAGYGAYRVSNDKRDVKVSLFTAFFLATIMGVRFKRSKKIMPAGLVAGLSLMMILRLVLLLL.

3 helical membrane-spanning segments follow: residues 1 to 21 (MDLIGFGYAALVTFGSIFGYK), 24 to 44 (GGVPSLIAGLFVGCLAGYGAY), and 79 to 99 (PAGLVAGLSLMMILRLVLLLL).

Belongs to the TMEM14 family. Expressed at significantly higher levels in ovarian cancer tissues than in normal tissues (at protein level).

The protein resides in the mitochondrion membrane. It localises to the endoplasmic reticulum membrane. Inhibits apoptosis via negative regulation of the mitochondrial outer membrane permeabilization involved in apoptotic signaling pathway. This Homo sapiens (Human) protein is Transmembrane protein 14A (TMEM14A).